We begin with the raw amino-acid sequence, 405 residues long: Elongation factor Tu (405 aa).

The tr-type G domain occupies 10–215; the sequence is KPHVNVGTIG…AIDAYIPTPE (206 aa). Residues 19–26 form a G1 region; sequence GHVDHGKT. Residue 19–26 coordinates GTP; the sequence is GHVDHGKT. Residue threonine 26 coordinates Mg(2+). Residues 61–65 form a G2 region; sequence GITIN. The tract at residues 82-85 is G3; sequence DCPG. GTP is bound by residues 82 to 86 and 137 to 140; these read DCPGH and NKVD. The segment at 137–140 is G4; that stretch reads NKVD. Positions 175 to 177 are G5; the sequence is SAL.

It belongs to the TRAFAC class translation factor GTPase superfamily. Classic translation factor GTPase family. EF-Tu/EF-1A subfamily. In terms of assembly, monomer.

It localises to the cytoplasm. The catalysed reaction is GTP + H2O = GDP + phosphate + H(+). Functionally, GTP hydrolase that promotes the GTP-dependent binding of aminoacyl-tRNA to the A-site of ribosomes during protein biosynthesis. The polypeptide is Elongation factor Tu (Deinococcus geothermalis (strain DSM 11300 / CIP 105573 / AG-3a)).